The following is a 66-amino-acid chain: Beta-defensin 107A (66 aa).

The signal sequence occupies residues 1-22 (MKIFFFIFAALILLAQIFQART). 2 cysteine pairs are disulfide-bonded: Cys-37–Cys-51 and Cys-41–Cys-60.

It belongs to the beta-defensin family.

Its subcellular location is the secreted. Its function is as follows. Has antibacterial activity. In Hylobates lar (Lar gibbon), this protein is Beta-defensin 107A (DEFB107A).